The following is a 139-amino-acid chain: Large ribosomal subunit protein uL13c (139 aa).

The protein belongs to the universal ribosomal protein uL13 family. As to quaternary structure, part of the 50S ribosomal subunit.

The protein resides in the plastid. It is found in the chloroplast. In Trieres chinensis (Marine centric diatom), this protein is Large ribosomal subunit protein uL13c.